The following is a 383-amino-acid chain: Putative F-box protein At3g22650 (383 aa).

The 48-residue stretch at 3–50 (SCERSLLPIDIIEEICCRIPVEYLTQFKLTCKQWFALLKDKRFIYKYL) folds into the F-box domain.

This is Putative F-box protein At3g22650 from Arabidopsis thaliana (Mouse-ear cress).